The primary structure comprises 130 residues: uncharacterized protein (130 aa).

Positions 23-130 (SHLRLLPTAN…GAHQLSSPSS (108 aa)) are disordered. Polar residues predominate over residues 30–45 (TANSPSGSNQPTNPNR).

This is an uncharacterized protein from Homo sapiens (Human).